The following is a 193-amino-acid chain: Transmembrane protein 276 (193 aa).

An N-terminal signal peptide occupies residues 1–32 (MTPRPGGEWSSALSHLALGAVSLHAALSTAQA). 4 helical membrane-spanning segments follow: residues 35-55 (GAAA…ASGL), 63-83 (AGAW…FHWV), 89-109 (SANL…HLGA), and 114-134 (VAGQ…AVFT).

It is found in the membrane. This Bos taurus (Bovine) protein is Transmembrane protein 276.